The following is a 335-amino-acid chain: Biotin synthase (335 aa).

The Radical SAM core domain maps to 46-274; that stretch reads YKVQLASLFS…KSKIRLSAGR (229 aa). [4Fe-4S] cluster-binding residues include C61, C65, and C68. [2Fe-2S] cluster-binding residues include C105, C137, C197, and R269.

It belongs to the radical SAM superfamily. Biotin synthase family. As to quaternary structure, homodimer. [4Fe-4S] cluster is required as a cofactor. It depends on [2Fe-2S] cluster as a cofactor.

The catalysed reaction is (4R,5S)-dethiobiotin + (sulfur carrier)-SH + 2 reduced [2Fe-2S]-[ferredoxin] + 2 S-adenosyl-L-methionine = (sulfur carrier)-H + biotin + 2 5'-deoxyadenosine + 2 L-methionine + 2 oxidized [2Fe-2S]-[ferredoxin]. It functions in the pathway cofactor biosynthesis; biotin biosynthesis; biotin from 7,8-diaminononanoate: step 2/2. In terms of biological role, catalyzes the conversion of dethiobiotin (DTB) to biotin by the insertion of a sulfur atom into dethiobiotin via a radical-based mechanism. This Prochlorococcus marinus (strain MIT 9515) protein is Biotin synthase.